Reading from the N-terminus, the 524-residue chain is Chromosomal replication initiator protein DnaA (524 aa).

Positions 1–73 are domain I, interacts with DnaA modulators; the sequence is MELPESAWEQ…DELLSSADHH (73 aa). The interval 73-187 is domain II; sequence HPITSVEISV…DVEGGLQHKS (115 aa). 3 stretches are compositionally biased toward polar residues: residues 86-95, 106-126, and 153-165; these read RSTSFETNQG, APRQ…QPQQ, and NGYN…QPYN. The interval 86–173 is disordered; the sequence is RSTSFETNQG…YNDNPMGQGK (88 aa). Residues 188-404 are domain III, AAA+ region; the sequence is NLNPTFIFDN…GALKRVIANA (217 aa). ATP-binding residues include glycine 232, glycine 234, lysine 235, and threonine 236. The domain IV, binds dsDNA stretch occupies residues 405–524; the sequence is HFTGRDISVE…VKNLLRTLTT (120 aa).

Belongs to the DnaA family. In terms of assembly, oligomerizes as a right-handed, spiral filament on DNA at oriC.

It is found in the cytoplasm. In terms of biological role, plays an essential role in the initiation and regulation of chromosomal replication. ATP-DnaA binds to the origin of replication (oriC) to initiate formation of the DNA replication initiation complex once per cell cycle. Binds the DnaA box (a 9 base pair repeat at the origin) and separates the double-stranded (ds)DNA. Forms a right-handed helical filament on oriC DNA; dsDNA binds to the exterior of the filament while single-stranded (ss)DNA is stabiized in the filament's interior. The ATP-DnaA-oriC complex binds and stabilizes one strand of the AT-rich DNA unwinding element (DUE), permitting loading of DNA polymerase. After initiation quickly degrades to an ADP-DnaA complex that is not apt for DNA replication. Binds acidic phospholipids. This Saccharophagus degradans (strain 2-40 / ATCC 43961 / DSM 17024) protein is Chromosomal replication initiator protein DnaA.